Consider the following 1382-residue polypeptide: DNA-directed RNA polymerase subunit beta'' (1382 aa).

Residues Cys224, Cys294, Cys301, and Cys304 each contribute to the Zn(2+) site.

Belongs to the RNA polymerase beta' chain family. RpoC2 subfamily. As to quaternary structure, in plastids the minimal PEP RNA polymerase catalytic core is composed of four subunits: alpha, beta, beta', and beta''. When a (nuclear-encoded) sigma factor is associated with the core the holoenzyme is formed, which can initiate transcription. Requires Zn(2+) as cofactor.

The protein localises to the plastid. Its subcellular location is the chloroplast. It catalyses the reaction RNA(n) + a ribonucleoside 5'-triphosphate = RNA(n+1) + diphosphate. Functionally, DNA-dependent RNA polymerase catalyzes the transcription of DNA into RNA using the four ribonucleoside triphosphates as substrates. The sequence is that of DNA-directed RNA polymerase subunit beta'' from Dioscorea elephantipes (Elephant's foot yam).